Consider the following 300-residue polypeptide: Delta(7)-sterol 5(6)-desaturase erg31 (300 aa).

The next 3 membrane-spanning stretches (helical) occupy residues Ile33–Leu53, Val78–Ala98, and Tyr117–His137. Residues Pro123–Asn248 enclose the Fatty acid hydroxylase domain. Residues His137–His141 carry the Histidine box-1 motif. Residues His150–His154 carry the Histidine box-2 motif. The chain crosses the membrane as a helical span at residues His180 to Val200. Positions His225–His229 match the Histidine box-3 motif.

It belongs to the sterol desaturase family. The cofactor is Fe cation.

The protein resides in the endoplasmic reticulum membrane. It carries out the reaction episterol + 2 Fe(II)-[cytochrome b5] + O2 + 2 H(+) = 5-dehydroepisterol + 2 Fe(III)-[cytochrome b5] + 2 H2O. Its pathway is steroid metabolism; ergosterol biosynthesis. In terms of biological role, C-5 sterol desaturase; part of the third module of ergosterol biosynthesis pathway that includes by the late steps of the pathway. Erg31 and erg32 catalyze the introduction of a C-5 double bond in the B ring to produce 5-dehydroepisterol. The third module or late pathway involves the ergosterol synthesis itself through consecutive reactions that mainly occur in the endoplasmic reticulum (ER) membrane. Firstly, the squalene synthase erg9 catalyzes the condensation of 2 farnesyl pyrophosphate moieties to form squalene, which is the precursor of all steroids. Secondly, squalene is converted into lanosterol by the consecutive action of the squalene epoxidase erg1 and the lanosterol synthase erg7. The lanosterol 14-alpha-demethylase erg11/cyp1 catalyzes C14-demethylation of lanosterol to produce 4,4'-dimethyl cholesta-8,14,24-triene-3-beta-ol. In the next steps, a complex process involving various demethylation, reduction and desaturation reactions catalyzed by the C-14 reductase erg24 and the C-4 demethylation complex erg25-erg26-erg27 leads to the production of zymosterol. Erg28 likely functions in the C-4 demethylation complex reaction by tethering erg26 and Erg27 to the endoplasmic reticulum or to facilitate interaction between these proteins. Then, the sterol 24-C-methyltransferase erg6 catalyzes the methyl transfer from S-adenosyl-methionine to the C-24 of zymosterol to form fecosterol. The C-8 sterol isomerase erg2 catalyzes the reaction which results in unsaturation at C-7 in the B ring of sterols and thus converts fecosterol to episterol. The sterol-C5-desaturases erg31 and erg32 then catalyze the introduction of a C-5 double bond in the B ring to produce 5-dehydroepisterol. The C-22 sterol desaturase erg5 further converts 5-dehydroepisterol into ergosta-5,7,22,24(28)-tetraen-3beta-ol by forming the C-22(23) double bond in the sterol side chain. Finally, ergosta-5,7,22,24(28)-tetraen-3beta-ol is substrate of the C-24(28) sterol reductase erg4 to produce ergosterol. In the genus Schizosaccharomyces, a second route exists between lanosterol and fecosterol, via the methylation of lanosterol to eburicol by erg6, followed by C14-demethylation by erg11/cyp1 and C4-demethylation by the demethylation complex erg25-erg26-erg27. This chain is Delta(7)-sterol 5(6)-desaturase erg31, found in Schizosaccharomyces pombe (strain 972 / ATCC 24843) (Fission yeast).